The primary structure comprises 346 residues: Protein phosphatase 1 regulatory subunit 7 (346 aa).

The span at 1-13 shows a compositional bias: acidic residues; the sequence is MADEEGETEVQEM. A disordered region spans residues 1–46; the sequence is MADEEGETEVQEMEVDRRESDESADDEAKEKPDRVDGGVKNGEVPL. The segment covering 14–37 has biased composition (basic and acidic residues); it reads EVDRRESDESADDEAKEKPDRVDG. 11 LRR repeats span residues 63–84, 85–106, 107–128, 129–150, 151–172, 173–194, 195–216, 217–238, 239–260, 261–282, and 283–304; these read EAEDVDLNHFKIGKIQGFEVLK, KVKTLCLRQNLIKLIENLEQLV, TLTELDLYDNQIRKIGNLETLR, DLQILDLSFNLLRRIEGLESLS, HLQRLYLVNNKISRIENFGTLT, QLRLLELGSNRLRVIENLDSLR, ELDSLFLGKNKITKLQNLETLT, NLTVLSVQSNRLTKIEGLQNLV, NLRELYLSDNGIQVIEGLENNN, KLTTLDLASNRIKRIENIKHLS, and ELQEFWMNDNLVENWSDLEELS. The region spanning 317–346 is the LRRCT domain; the sequence is NPLQKDAQYRRKIMLALPSVRQIDATFVRF.

It belongs to the SDS22 family.

Its subcellular location is the nucleus. Regulatory subunit of protein phosphatase 1. This Xenopus tropicalis (Western clawed frog) protein is Protein phosphatase 1 regulatory subunit 7 (ppp1r7).